The following is a 430-amino-acid chain: Protein translocase subunit SecY (430 aa).

Helical transmembrane passes span 18-38 (IFFT…PAPG), 68-88 (FSIF…MQLL), 117-137 (FAII…NNYL), 148-168 (MSYL…LWLG), 179-199 (GISI…LIQF), 215-235 (LQVA…VYVL), 270-290 (VIPV…TMFF), 308-328 (NIGM…YAFV), 368-388 (FVGS…TKFM), and 390-410 (LPQS…VAIE).

This sequence belongs to the SecY/SEC61-alpha family. Component of the Sec protein translocase complex. Heterotrimer consisting of SecY, SecE and SecG subunits. The heterotrimers can form oligomers, although 1 heterotrimer is thought to be able to translocate proteins. Interacts with the ribosome. Interacts with SecDF, and other proteins may be involved. Interacts with SecA.

Its subcellular location is the cell membrane. In terms of biological role, the central subunit of the protein translocation channel SecYEG. Consists of two halves formed by TMs 1-5 and 6-10. These two domains form a lateral gate at the front which open onto the bilayer between TMs 2 and 7, and are clamped together by SecE at the back. The channel is closed by both a pore ring composed of hydrophobic SecY resides and a short helix (helix 2A) on the extracellular side of the membrane which forms a plug. The plug probably moves laterally to allow the channel to open. The ring and the pore may move independently. This chain is Protein translocase subunit SecY, found in Staphylococcus carnosus (strain TM300).